The primary structure comprises 395 residues: Altered inheritance of mitochondria protein 39, mitochondrial (395 aa).

Residues 156–176 traverse the membrane as a helical segment; sequence QIWSAIFGGIFGVILGYSLIY.

Belongs to the AIM39 family.

Its subcellular location is the mitochondrion membrane. The chain is Altered inheritance of mitochondria protein 39, mitochondrial (AIM39) from Saccharomyces cerevisiae (strain RM11-1a) (Baker's yeast).